Consider the following 244-residue polypeptide: Uridylate kinase (244 aa).

Residue 15–18 participates in ATP binding; the sequence is KLSG. Positions 23 to 28 are involved in allosteric activation by GTP; that stretch reads GSEGFG. Residue glycine 57 coordinates UMP. ATP is bound by residues glycine 58 and arginine 62. UMP is bound by residues aspartate 77 and 138–145; that span reads TGNPFFTT. Threonine 165, phenylalanine 171, and aspartate 174 together coordinate ATP.

It belongs to the UMP kinase family. Homohexamer.

It localises to the cytoplasm. The enzyme catalyses UMP + ATP = UDP + ADP. It functions in the pathway pyrimidine metabolism; CTP biosynthesis via de novo pathway; UDP from UMP (UMPK route): step 1/1. With respect to regulation, allosterically activated by GTP. Inhibited by UTP. Catalyzes the reversible phosphorylation of UMP to UDP. This chain is Uridylate kinase, found in Aeromonas salmonicida (strain A449).